The primary structure comprises 979 residues: Collagen alpha-2(I) chain (979 aa).

Positions 1-979 (SGGFDFSFLP…FGYEGDFYRA (979 aa)) are disordered. Pro10, Pro13, Pro35, and Pro41 each carry 4-hydroxyproline. Low complexity predominate over residues 28–41 (LMGPRGPPGASGAP). Lys88 is modified (5-hydroxylysine; alternate). Lys88 carries O-linked (Gal...) hydroxylysine; alternate glycosylation. The segment covering 128-157 (VGAPGPAGARGSDGSVGPVGPAGPIGSAGP) has biased composition (low complexity). Positions 256–265 (GESGGKGEPG) are enriched in gly residues. Low complexity predominate over residues 266 to 276 (SAGPQGPPGSS). Residues 298–307 (GLRGGPGSRG) show a composition bias toward gly residues. Residues Pro341 and Pro344 each carry the 4-hydroxyproline modification. Over residues 434–443 (GVQGGKGEQG) the composition is skewed to gly residues. Composition is skewed to low complexity over residues 490–507 (PGESGAVGPSGAIGSRGP) and 519–529 (EPGVVGAPGTA). Positions 530 to 548 (GPAGSGGPGERGAAGIPGG) are enriched in gly residues. 2 stretches are compositionally biased toward low complexity: residues 570 to 599 (RGAPGAVGAPGPAGEAGAAGPAGPAGPRGS) and 606 to 626 (VGPAGPNGFAGPAGAAGQPGA). Residues 627-636 (KGERGTKGPK) are compositionally biased toward basic and acidic residues. Low complexity predominate over residues 644–654 (PTGPVGSAGPA). Gly residues predominate over residues 664–673 (GSRGDGGPPG). The segment covering 675-684 (TGFPGAAGRT) has biased composition (low complexity). A compositionally biased stretch (gly residues) spans 721–730 (GETGAGGPPG). 2 stretches are compositionally biased toward low complexity: residues 738–765 (SGEPGTAGPPGTAGPQGLLGAPGILGLP) and 773–783 (LPGVAGAVGEP). Positions 784-802 (GPLGIGPPGARGPSGGDGL) are enriched in gly residues. 2 stretches are compositionally biased toward low complexity: residues 811–833 (YAGNAGPVGAAGAPGPHGSVGPA) and 841–856 (EPGPVGSVGPVGALGP). Positions 866–877 (RGDKGEPGDKGP) are enriched in basic and acidic residues. Positions 951–961 (GPGPPGPPGPP) are enriched in pro residues.

The protein belongs to the fibrillar collagen family. Trimers of one alpha 2(I) and two alpha 1(I) chains. Interacts (via C-terminus) with TMEM131 (via PapD-L domain); the interaction is direct and is involved in assembly and TRAPPIII ER-to-Golgi transport complex-dependent secretion of collagen. Post-translationally, prolines at the third position of the tripeptide repeating unit (G-X-Y) are hydroxylated in some or all of the chains. In terms of tissue distribution, expressed in bones.

It localises to the secreted. The protein resides in the extracellular space. Its subcellular location is the extracellular matrix. In terms of biological role, type I collagen is a member of group I collagen (fibrillar forming collagen). The polypeptide is Collagen alpha-2(I) chain (Neocnus dousman (Slow ground sloth)).